The following is a 158-amino-acid chain: Serine-protein kinase RsbW (158 aa).

Belongs to the anti-sigma-factor family.

It carries out the reaction L-seryl-[protein] + ATP = O-phospho-L-seryl-[protein] + ADP + H(+). The enzyme catalyses L-threonyl-[protein] + ATP = O-phospho-L-threonyl-[protein] + ADP + H(+). Functionally, negative regulator of sigma-B activity. Phosphorylates and inactivates its specific antagonist protein, RsbV. Upon phosphorylation of RsbV, RsbW is released and binds to sigma-B, thereby blocking its ability to form an RNA polymerase holoenzyme (E-sigma-B). This Oceanobacillus iheyensis (strain DSM 14371 / CIP 107618 / JCM 11309 / KCTC 3954 / HTE831) protein is Serine-protein kinase RsbW.